A 150-amino-acid chain; its full sequence is General odorant-binding protein 19d (150 aa).

The N-terminal stretch at 1 to 23 (MSHLVHLTVLLLVGILCLGATSA) is a signal peptide. 3 disulfide bridges follow: Cys41-Cys72, Cys68-Cys126, and Cys116-Cys135.

The protein belongs to the PBP/GOBP family. As to expression, expressed in the antenna, mostly on the anterior surface of the third antennal segment. Also detected in the maxillary palps and in cells at the bases of the taste hairs on the proboscis and internal taste organs of the head.

The protein resides in the secreted. This chain is General odorant-binding protein 19d (Obp19d), found in Drosophila melanogaster (Fruit fly).